The chain runs to 270 residues: Cell division protein DivIB (270 aa).

Residues 1-28 (MAENKRVISIENRIPELKKYRKKKLVRH) lie on the Cytoplasmic side of the membrane. Residues 29–49 (LAILIGIFVILIAITLYFLSP) form a helical membrane-spanning segment. Topologically, residues 50 to 270 (LSKLDKIAVS…AAKEKKETNE (221 aa)) are extracellular. A POTRA domain is found at 51-119 (SKLDKIAVSG…NDVQINITEF (69 aa)).

It belongs to the FtsQ/DivIB family. DivIB subfamily.

It is found in the cell membrane. In terms of biological role, cell division protein that may be involved in stabilizing or promoting the assembly of the division complex. The protein is Cell division protein DivIB of Listeria monocytogenes serovar 1/2a (strain ATCC BAA-679 / EGD-e).